The primary structure comprises 300 residues: MSDPNVNDAIEPVESVEDELGTVEGADNEDTEASAEAEAADDTVVAETDEDATDAEADETAEATDAEATEAEADADADAAEAEESEEEPEAEEPELDPIEKLRQELRVLPGEWYVIHTYAGYENRVKTNLEQRAVSLNVEDYIFQAEVPQEEVVQIKNGDRKTIRQNKLPGYVLVRMDLTNESWGVVRNTPGVTGFVGNAYDPYPLTLDEIVKMLAPEAEEKAAREAAEAEGKPAPQRKVEVQVLDFEVGDSVTVTDGPFATLQATINEINADSKKVKGLVEIFGRETPVELSFDQIQKN.

Residues 1–99 (MSDPNVNDAI…EAEEPELDPI (99 aa)) form a disordered region. 2 stretches are compositionally biased toward acidic residues: residues 14–41 (ESVE…EAAD) and 47–97 (ETDE…PELD).

The protein belongs to the NusG family.

Functionally, participates in transcription elongation, termination and antitermination. The protein is Transcription termination/antitermination protein NusG of Streptomyces coelicolor (strain ATCC BAA-471 / A3(2) / M145).